Reading from the N-terminus, the 365-residue chain is Cytosolic 5'-nucleotidase 1A (365 aa).

Positions 1–11 (MEPGQPREARE) are enriched in basic and acidic residues. Positions 1-23 (MEPGQPREAREPGPGAETAAVPR) are disordered. The Nucleophile role is filled by aspartate 208.

This sequence belongs to the 5'-nucleotidase type 3 family. Requires Mg(2+) as cofactor.

Its subcellular location is the cytoplasm. The catalysed reaction is a ribonucleoside 5'-phosphate + H2O = a ribonucleoside + phosphate. It carries out the reaction a 2'-deoxyribonucleoside 5'-phosphate + H2O = a 2'-deoxyribonucleoside + phosphate. It catalyses the reaction IMP + H2O = inosine + phosphate. The enzyme catalyses AMP + H2O = adenosine + phosphate. The catalysed reaction is dCMP + H2O = 2'-deoxycytidine + phosphate. With respect to regulation, activated by ADP. Its function is as follows. Catalyzes the hydrolysis of ribonucleotide and deoxyribonucleotide monophosphates, releasing inorganic phosphate and the corresponding nucleoside. AMP is the major substrate but can also hydrolyze dCMP and IMP. This chain is Cytosolic 5'-nucleotidase 1A (Nt5c1a), found in Mus musculus (Mouse).